We begin with the raw amino-acid sequence, 290 residues long: Arylamine N-acetyltransferase 1 (290 aa).

Met1 is subject to N-acetylmethionine. Cys68 serves as the catalytic Acyl-thioester intermediate. Ser103 contributes to the CoA binding site. Ile106 to His107 provides a ligand contact to substrate. Residues His107 and Asp122 contribute to the active site. CoA contacts are provided by Tyr208 and Ser287.

It belongs to the arylamine N-acetyltransferase family.

It is found in the cytoplasm. It catalyses the reaction an arylamine + acetyl-CoA = an N-acetylarylamine + CoA. Functionally, participates in the detoxification of a plethora of hydrazine and arylamine drugs. This chain is Arylamine N-acetyltransferase 1 (NAT1), found in Mesocricetus auratus (Golden hamster).